A 334-amino-acid chain; its full sequence is Trans-1,2-dihydrobenzene-1,2-diol dehydrogenase (334 aa).

The protein belongs to the Gfo/Idh/MocA family. As to quaternary structure, homodimer. As to expression, small intestine.

The enzyme catalyses (1R,2R)-1,2-dihydrobenzene-1,2-diol + NADP(+) = catechol + NADPH + H(+). The catalysed reaction is D-xylose + NADP(+) = D-xylono-1,5-lactone + NADPH + H(+). The protein is Trans-1,2-dihydrobenzene-1,2-diol dehydrogenase (DHDH) of Homo sapiens (Human).